Reading from the N-terminus, the 711-residue chain is Protein ACTIVITY OF BC1 COMPLEX KINASE 3, chloroplastic (711 aa).

The transit peptide at 1 to 42 directs the protein to the chloroplast; that stretch reads MSLVVGQSLGLTLVGDGLSLRNSKINVGKSKFFSVNRRRLAR. The Protein kinase domain maps to 216–546; the sequence is SVSPEPIAAA…IELLFKDGKF (331 aa). ATP-binding positions include 222-230 and Lys245; that span reads IAAASLGQV. Catalysis depends on Asp379, which acts as the Proton acceptor.

The protein belongs to the protein kinase superfamily. ADCK protein kinase family. In terms of assembly, interacts with ABC1K1 in plastoglobules (PG). Interacts with PGM48.

The protein resides in the plastid. Its subcellular location is the chloroplast. The protein localises to the plastoglobule. The enzyme catalyses L-seryl-[protein] + ATP = O-phospho-L-seryl-[protein] + ADP + H(+). It catalyses the reaction L-threonyl-[protein] + ATP = O-phospho-L-threonyl-[protein] + ADP + H(+). Its function is as follows. Kinase that can phosphorylate the tocopherol cyclase VTE1, a key enzyme of tocopherol (vitamin E) metabolism and involved in the recycling of oxidated alpha-tocopherol quinone, possibly stabilizing it at plastoglobules. Also regulates membrane prenylquinone composition. Required for photooxidative stress responses to prevent photosystem II core and chlorophyll degradations. Together with ABC1K1, contributes to plastoglobule (PG) function in prenyl-lipid metabolism, stress response, and thylakoid remodeling. Promotes photodamage of chloroplasts under continuous red light, thus working in opposition to ABC1K1. This Arabidopsis thaliana (Mouse-ear cress) protein is Protein ACTIVITY OF BC1 COMPLEX KINASE 3, chloroplastic.